Reading from the N-terminus, the 142-residue chain is Nucleoside diphosphate kinase (142 aa).

ATP-binding residues include Lys-11, Phe-59, Arg-87, Thr-93, Arg-104, and Asn-114. The active-site Pros-phosphohistidine intermediate is the His-117.

This sequence belongs to the NDK family. As to quaternary structure, homotetramer. Mg(2+) is required as a cofactor.

The protein localises to the cytoplasm. It catalyses the reaction a 2'-deoxyribonucleoside 5'-diphosphate + ATP = a 2'-deoxyribonucleoside 5'-triphosphate + ADP. It carries out the reaction a ribonucleoside 5'-diphosphate + ATP = a ribonucleoside 5'-triphosphate + ADP. Functionally, major role in the synthesis of nucleoside triphosphates other than ATP. The ATP gamma phosphate is transferred to the NDP beta phosphate via a ping-pong mechanism, using a phosphorylated active-site intermediate. This Salinibacter ruber (strain DSM 13855 / M31) protein is Nucleoside diphosphate kinase.